Consider the following 255-residue polypeptide: 5'-nucleotidase SurE (255 aa).

Residues aspartate 13, aspartate 14, serine 44, and asparagine 100 each coordinate a divalent metal cation.

It belongs to the SurE nucleotidase family. A divalent metal cation is required as a cofactor.

The protein resides in the cytoplasm. It carries out the reaction a ribonucleoside 5'-phosphate + H2O = a ribonucleoside + phosphate. Its function is as follows. Nucleotidase that shows phosphatase activity on nucleoside 5'-monophosphates. The chain is 5'-nucleotidase SurE from Bacteroides fragilis (strain ATCC 25285 / DSM 2151 / CCUG 4856 / JCM 11019 / LMG 10263 / NCTC 9343 / Onslow / VPI 2553 / EN-2).